The chain runs to 259 residues: Carbonic anhydrase 1 (259 aa).

At A1 the chain carries N-acetylalanine. In terms of domain architecture, Alpha-carbonic anhydrase spans H2 to F258. The active-site Proton donor/acceptor is H63. Residues H93, H95, and H118 each coordinate Zn(2+). Substrate contacts are provided by residues T197 and T197–T198.

This sequence belongs to the alpha-carbonic anhydrase family. The cofactor is Zn(2+).

It localises to the cytoplasm. It catalyses the reaction hydrogencarbonate + H(+) = CO2 + H2O. In terms of biological role, catalyzes the reversible hydration of carbon dioxide. This Chionodraco hamatus (Antarctic teleost icefish) protein is Carbonic anhydrase 1 (ca1).